Here is a 429-residue protein sequence, read N- to C-terminus: Glucose-1-phosphate adenylyltransferase (429 aa).

Residues Gly-162, 177–178 (EK), and Ser-209 each bind alpha-D-glucose 1-phosphate.

Belongs to the bacterial/plant glucose-1-phosphate adenylyltransferase family. In terms of assembly, homotetramer.

It carries out the reaction alpha-D-glucose 1-phosphate + ATP + H(+) = ADP-alpha-D-glucose + diphosphate. Its pathway is glycan biosynthesis; glycogen biosynthesis. Functionally, involved in the biosynthesis of ADP-glucose, a building block required for the elongation reactions to produce glycogen. Catalyzes the reaction between ATP and alpha-D-glucose 1-phosphate (G1P) to produce pyrophosphate and ADP-Glc. This chain is Glucose-1-phosphate adenylyltransferase, found in Trichormus variabilis (strain ATCC 29413 / PCC 7937) (Anabaena variabilis).